The following is a 490-amino-acid chain: Polyamine transporter RMV1 (490 aa).

The segment covering 1-21 has biased composition (polar residues); it reads MTELSSPNLDSASQKPRISTE. The interval 1 to 38 is disordered; the sequence is MTELSSPNLDSASQKPRISTENPPPPPPHISIGVTTGD. 12 consecutive transmembrane segments (helical) span residues 53–73, 83–103, 116–136, 160–180, 188–208, 231–248, 273–293, 303–323, 363–383, 386–406, 425–445, and 448–468; these read ITVL…PFGI, LLAI…EALI, GYVV…QGWV, IPIL…TVAL, LSIV…PFVV, GVNW…LNYW, LLLV…AIAL, FADI…QAAA, TPWV…WLSF, IVAA…ITFV, VLGS…IMAF, and LKVA…QPCL.

The protein belongs to the amino acid-polyamine-organocation (APC) superfamily. Polyamine:cation symporter (PHS) (TC 2.A.3.12) family.

It localises to the cell membrane. In terms of biological role, cell membrane polyamine/proton symporter involved in the polyamine uptake in cells. Possesses high affinity for spermine and spermidine and lower affinity for putrescine. Transports paraquat, a polyamine analog, and thus confers sensitivity to this chemical which is used as a herbicide. In Arabidopsis thaliana (Mouse-ear cress), this protein is Polyamine transporter RMV1 (RMV1).